Reading from the N-terminus, the 433-residue chain is T-box transcription factor T (433 aa).

The T-box DNA-binding region spans 49–217 (LWLRFKELTN…YNPFAKAFLD (169 aa)).

Monomer. Binds DNA as a monomer.

It localises to the nucleus. Functionally, involved in the transcriptional regulation of genes required for mesoderm formation and differentiation. Binds to a palindromic site (called T site) and activates gene transcription when bound to such a site. This chain is T-box transcription factor T, found in Gallus gallus (Chicken).